The following is a 351-amino-acid chain: Peptide chain release factor 1 (351 aa).

Gln-229 carries the N5-methylglutamine modification. The segment at 278–297 is disordered; it reads RVDDERSADRAAQVGSGDRS.

This sequence belongs to the prokaryotic/mitochondrial release factor family. Methylated by PrmC. Methylation increases the termination efficiency of RF1.

It localises to the cytoplasm. Peptide chain release factor 1 directs the termination of translation in response to the peptide chain termination codons UAG and UAA. This is Peptide chain release factor 1 from Roseobacter denitrificans (strain ATCC 33942 / OCh 114) (Erythrobacter sp. (strain OCh 114)).